Consider the following 309-residue polypeptide: Porphobilinogen deaminase (309 aa).

Position 234 is an S-(dipyrrolylmethanemethyl)cysteine (Cys234).

The protein belongs to the HMBS family. Monomer. The cofactor is dipyrromethane.

It carries out the reaction 4 porphobilinogen + H2O = hydroxymethylbilane + 4 NH4(+). Its pathway is porphyrin-containing compound metabolism; protoporphyrin-IX biosynthesis; coproporphyrinogen-III from 5-aminolevulinate: step 2/4. In terms of biological role, tetrapolymerization of the monopyrrole PBG into the hydroxymethylbilane pre-uroporphyrinogen in several discrete steps. This chain is Porphobilinogen deaminase (hemC), found in Mycobacterium bovis (strain ATCC BAA-935 / AF2122/97).